The sequence spans 733 residues: E3 ubiquitin-protein ligase COP1 (733 aa).

Residues 1 to 43 (MSGSRQAGSGSAGTSPGSSAASSVTSASSSLSSSPSPPSVAAS) are disordered. Positions 111-115 (SSRKR) match the Nuclear localization signal 1 motif. The RING-type zinc finger occupies 138 to 176 (CPICFDMIEEAYMTKCGHSFCYKCIHQSLEDNNRCPKCN). Residues 197–208 (KQKQRFEEKRFK) carry the Nuclear localization signal 2 motif. Residues 231–306 (DQDNLDLANV…RVEEMSGLYS (76 aa)) are a coiled coil. Positions 237 to 247 (LANVNLMLELL) match the Nuclear export signal motif. The tract at residues 307 to 327 (PVSEDSTVPQFEAPSPSHSSI) is disordered. WD repeat units lie at residues 421–460 (NGSS…QDAV), 470–510 (TCNS…RSKV), 513–553 (EHEK…SVAS), 555–595 (EAKA…QPIM), 599–637 (GHRK…CLRS), 640–679 (GHIN…TLLT), and 695–731 (EDDT…KVLE). The interval 645–647 (KNF) is interaction with TRIB1.

The protein belongs to the COP1 family. Homodimer. Homodimerization is mediated by the coiled coil domain. Component of the DCX DET1-COP1 ubiquitin ligase complex at least composed of RBX1, DET1, DDB1, CUL4A and COP1. Isoform 2 does not interact with CUL4A but still binds to RBX1, suggesting that the interaction may be mediated by another cullin protein. Isoform 1 and isoform 2 interact with CUL5 but not with CUL1, CUL2 not CUL3. Interacts with bZIP transcription factors JUN, JUNB and JUND but not with FOS, ATF2 nor XBP1. Interacts with p53 (TP53). Interacts with COPS6; this interaction stabilizes RFWD2 through reducing its auto-ubiquitination and decelerating its turnover rate. Interacts with SFN; this interaction leads to SFN degradation. Interacts with p53/TP53 and MTA1. Interacts with TRIB1 (via C-terminus) and TRIB2.

The protein localises to the nucleus speckle. Its subcellular location is the cytoplasm. It carries out the reaction S-ubiquitinyl-[E2 ubiquitin-conjugating enzyme]-L-cysteine + [acceptor protein]-L-lysine = [E2 ubiquitin-conjugating enzyme]-L-cysteine + N(6)-ubiquitinyl-[acceptor protein]-L-lysine.. It functions in the pathway protein modification; protein ubiquitination. With respect to regulation, TRIB1 competes with substrates for RFWD2 binding. Functionally, E3 ubiquitin-protein ligase that mediates ubiquitination and subsequent proteasomal degradation of target proteins. E3 ubiquitin ligases accept ubiquitin from an E2 ubiquitin-conjugating enzyme in the form of a thioester and then directly transfers the ubiquitin to targeted substrates. Involved in JUN ubiquitination and degradation. Directly involved in p53 (TP53) ubiquitination and degradation, thereby abolishing p53-dependent transcription and apoptosis. Ubiquitinates p53 independently of MDM2 or RCHY1. Probably mediates E3 ubiquitin ligase activity by functioning as the essential RING domain subunit of larger E3 complexes. In contrast, it does not constitute the catalytic RING subunit in the DCX DET1-COP1 complex that negatively regulates JUN, the ubiquitin ligase activity being mediated by RBX1. Involved in 14-3-3 protein sigma/SFN ubiquitination and proteasomal degradation, leading to AKT activation and promotion of cell survival. Ubiquitinates MTA1 leading to its proteasomal degradation. Upon binding to TRIB1, ubiquitinates CEBPA, which lacks a canonical COP1-binding motif. The sequence is that of E3 ubiquitin-protein ligase COP1 from Mus musculus (Mouse).